The primary structure comprises 257 residues: Aspartate/glutamate leucyltransferase (257 aa).

The protein belongs to the R-transferase family. Bpt subfamily.

The protein resides in the cytoplasm. The enzyme catalyses N-terminal L-glutamyl-[protein] + L-leucyl-tRNA(Leu) = N-terminal L-leucyl-L-glutamyl-[protein] + tRNA(Leu) + H(+). The catalysed reaction is N-terminal L-aspartyl-[protein] + L-leucyl-tRNA(Leu) = N-terminal L-leucyl-L-aspartyl-[protein] + tRNA(Leu) + H(+). Functions in the N-end rule pathway of protein degradation where it conjugates Leu from its aminoacyl-tRNA to the N-termini of proteins containing an N-terminal aspartate or glutamate. The protein is Aspartate/glutamate leucyltransferase of Leptospira interrogans serogroup Icterohaemorrhagiae serovar copenhageni (strain Fiocruz L1-130).